Consider the following 380-residue polypeptide: Cytochrome b (380 aa).

The next 4 helical transmembrane spans lie at 34–54 (FGSL…FLAM), 78–99 (WLLR…YFHI), 114–134 (WNIG…GYVL), and 179–199 (FFTF…INLL). His-84 and His-98 together coordinate heme b. His-183 is a heme b binding site. His-202 serves as a coordination point for a ubiquinone. A run of 4 helical transmembrane segments spans residues 227 to 247 (YKDL…STFA), 289 to 309 (LGGV…PIIH), 321 to 341 (IAKT…WIGG), and 348 to 368 (FITI…LLIP).

It belongs to the cytochrome b family. The cytochrome bc1 complex contains 3 respiratory subunits (MT-CYB, CYC1 and UQCRFS1), 2 core proteins (UQCRC1 and UQCRC2) and probably 6 low-molecular weight proteins. Requires heme b as cofactor.

Its subcellular location is the mitochondrion inner membrane. Component of the ubiquinol-cytochrome c reductase complex (complex III or cytochrome b-c1 complex) that is part of the mitochondrial respiratory chain. The b-c1 complex mediates electron transfer from ubiquinol to cytochrome c. Contributes to the generation of a proton gradient across the mitochondrial membrane that is then used for ATP synthesis. The polypeptide is Cytochrome b (mt-cyb) (Pelophylax plancyi (Korean pond frog)).